Consider the following 116-residue polypeptide: Non-specific lipid-transfer protein D, cotyledon-specific isoform (116 aa).

The first 24 residues, 1 to 24, serve as a signal peptide directing secretion; that stretch reads MKNIFFSVFFLLSFLLCLANVSEA. 4 disulfide bridges follow: Cys-28-Cys-76, Cys-38-Cys-53, Cys-54-Cys-98, and Cys-74-Cys-112.

This sequence belongs to the plant LTP family.

In terms of biological role, plant non-specific lipid-transfer proteins transfer phospholipids as well as galactolipids across membranes. May play a role in wax or cutin deposition in the cell walls of expanding epidermal cells and certain secretory tissues. The chain is Non-specific lipid-transfer protein D, cotyledon-specific isoform from Ricinus communis (Castor bean).